Consider the following 298-residue polypeptide: Inosose dehydratase (298 aa).

This sequence belongs to the IolE/MocC family. The cofactor is glutathione. Co(2+) is required as a cofactor. It depends on Mn(2+) as a cofactor.

It catalyses the reaction scyllo-inosose = 3D-3,5/4-trihydroxycyclohexane-1,2-dione + H2O. Its pathway is polyol metabolism; myo-inositol degradation into acetyl-CoA; acetyl-CoA from myo-inositol: step 2/7. In terms of biological role, catalyzes the dehydration of inosose (2-keto-myo-inositol, 2KMI or 2,4,6/3,5-pentahydroxycyclohexanone) to 3D-(3,5/4)-trihydroxycyclohexane-1,2-dione (D-2,3-diketo-4-deoxy-epi-inositol). The polypeptide is Inosose dehydratase (Bacillus cereus (strain AH820)).